The following is a 184-amino-acid chain: Ribosome-recycling factor (184 aa).

This sequence belongs to the RRF family.

The protein resides in the cytoplasm. Functionally, responsible for the release of ribosomes from messenger RNA at the termination of protein biosynthesis. May increase the efficiency of translation by recycling ribosomes from one round of translation to another. The polypeptide is Ribosome-recycling factor (Caldicellulosiruptor bescii (strain ATCC BAA-1888 / DSM 6725 / KCTC 15123 / Z-1320) (Anaerocellum thermophilum)).